Consider the following 268-residue polypeptide: Eukaryotic translation initiation factor 2 subunit beta (268 aa).

The span at 1 to 12 (MADEINEIREEQ) shows a compositional bias: basic and acidic residues. The interval 1–85 (MADEINEIRE…LNNESVDAGE (85 aa)) is disordered. N-acetylalanine is present on Ala2. Phosphoserine; by CK2 is present on residues Ser42, Ser80, and Ser112. The C4-type zinc-finger motif lies at 222-246 (CLGCKSPDTILSKENRLFFLRCEKC).

It belongs to the eIF-2-beta/eIF-5 family. Eukaryotic translation initiation factor 2 eIF2 is a heterotrimeric complex composed of an alpha, a beta and a gamma subunit. Post-translationally, phosphorylated at Ser-42, Ser-80 and Ser-112 by CK2.

The protein resides in the cytoplasm. It localises to the cytosol. Component of the eIF2 complex that functions in the early steps of protein synthesis by forming a ternary complex with GTP and initiator tRNA. This complex binds to a 40S ribosomal subunit, followed by mRNA binding to form a 43S pre-initiation complex (43S PIC). Junction of the 60S ribosomal subunit to form the 80S initiation complex is preceded by hydrolysis of the GTP bound to eIF2 and release of an eIF2-GDP binary complex. In order for eIF2 to recycle and catalyze another round of initiation, the GDP bound to eIF2 must exchange with GTP by way of a reaction catalyzed by eIF2B. The chain is Eukaryotic translation initiation factor 2 subunit beta from Arabidopsis thaliana (Mouse-ear cress).